The sequence spans 320 residues: HPr kinase/phosphorylase (320 aa).

Active-site residues include His141 and Lys162. 156–163 (GHSGLGKS) serves as a coordination point for ATP. A Mg(2+)-binding site is contributed by Ser163. The active-site Proton acceptor; for phosphorylation activity. Proton donor; for dephosphorylation activity is the Asp180. The tract at residues 204-213 (LEVRGLGILN) is important for the catalytic mechanism of both phosphorylation and dephosphorylation. Position 205 (Glu205) interacts with Mg(2+). The active site involves Arg248. The tract at residues 269–274 (PVAVGR) is important for the catalytic mechanism of dephosphorylation.

The protein belongs to the HPrK/P family. Homohexamer. The cofactor is Mg(2+).

It catalyses the reaction [HPr protein]-L-serine + ATP = [HPr protein]-O-phospho-L-serine + ADP + H(+). It carries out the reaction [HPr protein]-O-phospho-L-serine + phosphate + H(+) = [HPr protein]-L-serine + diphosphate. In terms of biological role, catalyzes the ATP- as well as the pyrophosphate-dependent phosphorylation of a specific serine residue in HPr, a phosphocarrier protein of the phosphoenolpyruvate-dependent sugar phosphotransferase system (PTS). HprK/P also catalyzes the pyrophosphate-producing, inorganic phosphate-dependent dephosphorylation (phosphorolysis) of seryl-phosphorylated HPr (P-Ser-HPr). The polypeptide is HPr kinase/phosphorylase (Neisseria meningitidis serogroup A / serotype 4A (strain DSM 15465 / Z2491)).